We begin with the raw amino-acid sequence, 242 residues long: Small ribosomal subunit protein uS2 (242 aa).

This sequence belongs to the universal ribosomal protein uS2 family.

This Tolumonas auensis (strain DSM 9187 / NBRC 110442 / TA 4) protein is Small ribosomal subunit protein uS2.